The primary structure comprises 223 residues: Arginine kinase (223 aa).

Residues 56-222 (FVISTRVRLI…LELIKIEKEM (167 aa)) enclose the Phosphagen kinase C-terminal domain. ATP-binding positions include 59–63 (STRVR) and His68. Cys141 contacts L-arginine. Residues 150–154 (RASVH) and 175–180 (RGTRGE) each bind ATP. Position 180 (Glu180) interacts with L-arginine.

This sequence belongs to the ATP:guanido phosphotransferase family.

The catalysed reaction is L-arginine + ATP = N(omega)-phospho-L-arginine + ADP + H(+). In Chionoecetes opilio (Atlantic snow crab), this protein is Arginine kinase.